The following is a 159-amino-acid chain: Probable cyclic pyranopterin monophosphate synthase (159 aa).

Residues Met74–His76 and Met110–Glu111 each bind substrate. Asp125 is an active-site residue.

This sequence belongs to the MoaC family. Homohexamer; trimer of dimers.

It carries out the reaction (8S)-3',8-cyclo-7,8-dihydroguanosine 5'-triphosphate = cyclic pyranopterin phosphate + diphosphate. It functions in the pathway cofactor biosynthesis; molybdopterin biosynthesis. In terms of biological role, catalyzes the conversion of (8S)-3',8-cyclo-7,8-dihydroguanosine 5'-triphosphate to cyclic pyranopterin monophosphate (cPMP). In Methanococcoides burtonii (strain DSM 6242 / NBRC 107633 / OCM 468 / ACE-M), this protein is Probable cyclic pyranopterin monophosphate synthase.